We begin with the raw amino-acid sequence, 176 residues long: MTTIVSVRRHGKVVMGGDGQVSLGNTVMKGNAKKVRRLYHGQVIAGFAGATADAFTLFERFEGQLEKHQGHLVRAAVELAKEWRTDRSLSRLEAMLAVANKDASLIITGNGDVVEPEDGLIAMGSGGAYAQAAASALLKKTDLSAREIVETALGIAGDICVFTNHTQTIEEQDLAE.

Threonine 2 is an active-site residue. Glycine 157, cysteine 160, and threonine 163 together coordinate Na(+).

Belongs to the peptidase T1B family. HslV subfamily. As to quaternary structure, a double ring-shaped homohexamer of HslV is capped on each side by a ring-shaped HslU homohexamer. The assembly of the HslU/HslV complex is dependent on binding of ATP.

Its subcellular location is the cytoplasm. The enzyme catalyses ATP-dependent cleavage of peptide bonds with broad specificity.. With respect to regulation, allosterically activated by HslU binding. In terms of biological role, protease subunit of a proteasome-like degradation complex believed to be a general protein degrading machinery. This is ATP-dependent protease subunit HslV from Pseudomonas fluorescens (strain ATCC BAA-477 / NRRL B-23932 / Pf-5).